The following is a 736-amino-acid chain: 1,4-alpha-glucan branching enzyme GlgB (736 aa).

The Nucleophile role is filled by D417. E470 serves as the catalytic Proton donor.

The protein belongs to the glycosyl hydrolase 13 family. GlgB subfamily. As to quaternary structure, monomer.

It catalyses the reaction Transfers a segment of a (1-&gt;4)-alpha-D-glucan chain to a primary hydroxy group in a similar glucan chain.. The protein operates within glycan biosynthesis; glycogen biosynthesis. Catalyzes the formation of the alpha-1,6-glucosidic linkages in glycogen by scission of a 1,4-alpha-linked oligosaccharide from growing alpha-1,4-glucan chains and the subsequent attachment of the oligosaccharide to the alpha-1,6 position. The polypeptide is 1,4-alpha-glucan branching enzyme GlgB (Pseudomonas putida (strain ATCC 47054 / DSM 6125 / CFBP 8728 / NCIMB 11950 / KT2440)).